Here is a 155-residue protein sequence, read N- to C-terminus: Small ribosomal subunit protein uS17 (155 aa).

A2 carries the post-translational modification N-acetylalanine.

The protein belongs to the universal ribosomal protein uS17 family.

The sequence is that of Small ribosomal subunit protein uS17 from Drosophila pseudoobscura pseudoobscura (Fruit fly).